The chain runs to 102 residues: MNGQNIRIRLKAFDHRILDASTKEIVSTARRTGAQIRGPIPLPTHIEKFTVNRSPHIDKKSREQFEMRTHKRVLDIVDPTPQTVDALMKLDLAAGVDVEIKL.

The protein belongs to the universal ribosomal protein uS10 family. Part of the 30S ribosomal subunit.

Functionally, involved in the binding of tRNA to the ribosomes. The protein is Small ribosomal subunit protein uS10 of Methylorubrum populi (strain ATCC BAA-705 / NCIMB 13946 / BJ001) (Methylobacterium populi).